Reading from the N-terminus, the 88-residue chain is Small ribosomal subunit protein uS15 (88 aa).

Basic and acidic residues predominate over residues 1 to 12; it reads MITQEEQQKIID. A disordered region spans residues 1–24; that stretch reads MITQEEQQKIIDRFGNGPNDTGTP.

Belongs to the universal ribosomal protein uS15 family. In terms of assembly, part of the 30S ribosomal subunit. Forms a bridge to the 50S subunit in the 70S ribosome, contacting the 23S rRNA.

Its function is as follows. One of the primary rRNA binding proteins, it binds directly to 16S rRNA where it helps nucleate assembly of the platform of the 30S subunit by binding and bridging several RNA helices of the 16S rRNA. Forms an intersubunit bridge (bridge B4) with the 23S rRNA of the 50S subunit in the ribosome. The sequence is that of Small ribosomal subunit protein uS15 from Salinibacter ruber (strain DSM 13855 / M31).